A 338-amino-acid polypeptide reads, in one-letter code: Heat-inducible transcription repressor HrcA (338 aa).

Belongs to the HrcA family.

Its function is as follows. Negative regulator of class I heat shock genes (grpE-dnaK-dnaJ and groELS operons). Prevents heat-shock induction of these operons. The polypeptide is Heat-inducible transcription repressor HrcA (Thermotoga maritima (strain ATCC 43589 / DSM 3109 / JCM 10099 / NBRC 100826 / MSB8)).